Consider the following 1101-residue polypeptide: Helicase POLQ-like (1101 aa).

The disordered stretch occupies residues 212–261 (DLGDHSMKERDWKSSSHNTVNEELPHNCIEQPQQNDESSSKVRTSSDMNR). The span at 213–225 (LGDHSMKERDWKS) shows a compositional bias: basic and acidic residues. Over residues 241–258 (EQPQQNDESSSKVRTSSD) the composition is skewed to polar residues. The 173-residue stretch at 346–518 (LNSVQERKNL…FLQAEYYTSQ (173 aa)) folds into the Helicase ATP-binding domain. 359–366 (LPTSGGKT) serves as a coordination point for ATP. The DEAH box signature appears at 463–466 (DELH). Residues 566 to 758 (HLVALVTEVI…EFTKGIQTLF (193 aa)) enclose the Helicase C-terminal domain.

This sequence belongs to the helicase family. SKI2 subfamily. As to quaternary structure, homodimer. Interacts with POLN. Interacts with RAD51B and RAD51C; promoting association with the BCDX2 complex. Interacts with the replication protein A (RPA/RP-A) complex. Interacts with RAD51; stimulating HELQ DNA helicase activity and ability to unwing DNA.

The protein localises to the nucleus. It is found in the chromosome. The enzyme catalyses Couples ATP hydrolysis with the unwinding of duplex DNA by translocating in the 3'-5' direction.. It catalyses the reaction ATP + H2O = ADP + phosphate + H(+). With respect to regulation, ATPase activity is strongly stimulated by single-stranded DNA. Presence of ATP and Mg cofactor are required for helicase activity allowing to unwind duplex oligonucleotides up to 60-70-mer. This helicase activity is stimulated by replication protein A (RPA/RP-A) complex that binds to unwound regions and inhibits re-annealing. In terms of biological role, single-stranded 3'-5' DNA helicase that plays a key role in homology-driven double-strand break (DSB) repair. Involved in different DSB repair mechanisms that are guided by annealing of extensive stretches of complementary bases at break ends, such as microhomology-mediated end-joining (MMEJ), single-strand annealing (SSA) or synthesis-dependent strand annealing (SDSA). Possesses both DNA unwinding and annealing activities. Forms a complex with RAD51, stimulating HELQ DNA helicase activity and ability to unwing DNA. Efficiently unwinds substrates containing 3' overhangs or a D-loop. In contrast, interaction with the replication protein A (RPA/RP-A) complex inhibits DNA unwinding by HELQ but strongly stimulates DNA strand annealing. Triggers displacement of RPA from single-stranded DNA to facilitate annealing of complementary sequences. This chain is Helicase POLQ-like, found in Homo sapiens (Human).